Here is a 30-residue protein sequence, read N- to C-terminus: Kalata-B5 (30 aa).

The segment at residues 1–30 (GTPCGESCVYIPCISGVIGCSCTDKVCYLN) is a cross-link (cyclopeptide (Gly-Asn)). Disulfide bonds link C4–C20, C8–C22, and C13–C27.

This is a cyclic peptide.

In terms of biological role, probably participates in a plant defense mechanism. The chain is Kalata-B5 from Oldenlandia affinis.